Here is a 125-residue protein sequence, read N- to C-terminus: Small ribosomal subunit protein uS12 (125 aa).

A disordered region spans residues 1–27 (MPTINQLVRKGREKGEQKSTAPALKSC). Residue aspartate 89 is modified to 3-methylthioaspartic acid. The tract at residues 103 to 125 (DASGVQKRNQGRSKYGTKRPKKK) is disordered. The span at 111–125 (NQGRSKYGTKRPKKK) shows a compositional bias: basic residues.

Belongs to the universal ribosomal protein uS12 family. Part of the 30S ribosomal subunit. Contacts proteins S8 and S17. May interact with IF1 in the 30S initiation complex.

With S4 and S5 plays an important role in translational accuracy. In terms of biological role, interacts with and stabilizes bases of the 16S rRNA that are involved in tRNA selection in the A site and with the mRNA backbone. Located at the interface of the 30S and 50S subunits, it traverses the body of the 30S subunit contacting proteins on the other side and probably holding the rRNA structure together. The combined cluster of proteins S8, S12 and S17 appears to hold together the shoulder and platform of the 30S subunit. The sequence is that of Small ribosomal subunit protein uS12 from Syntrophomonas wolfei subsp. wolfei (strain DSM 2245B / Goettingen).